The chain runs to 423 residues: Gamma-glutamyl phosphate reductase (423 aa).

The protein belongs to the gamma-glutamyl phosphate reductase family.

The protein resides in the cytoplasm. It catalyses the reaction L-glutamate 5-semialdehyde + phosphate + NADP(+) = L-glutamyl 5-phosphate + NADPH + H(+). It participates in amino-acid biosynthesis; L-proline biosynthesis; L-glutamate 5-semialdehyde from L-glutamate: step 2/2. In terms of biological role, catalyzes the NADPH-dependent reduction of L-glutamate 5-phosphate into L-glutamate 5-semialdehyde and phosphate. The product spontaneously undergoes cyclization to form 1-pyrroline-5-carboxylate. The chain is Gamma-glutamyl phosphate reductase from Paramagnetospirillum magneticum (strain ATCC 700264 / AMB-1) (Magnetospirillum magneticum).